A 102-amino-acid chain; its full sequence is MGAIPLEHGLAVAGILFCLGLVGLMVRRNILFVLMSLEVMMNASALAFVVAGARWVQPDGQVMFILVISLAAAEASIGLAILLQLYRRFHTLDIDAASEMRG.

3 helical membrane passes run 6-26, 30-50, and 62-82; these read LEHG…GLMV, ILFV…AFVV, and VMFI…LAIL.

Belongs to the complex I subunit 4L family. In terms of assembly, NDH-1 is composed of 13 different subunits. Subunits NuoA, H, J, K, L, M, N constitute the membrane sector of the complex.

It localises to the cell inner membrane. The catalysed reaction is a quinone + NADH + 5 H(+)(in) = a quinol + NAD(+) + 4 H(+)(out). In terms of biological role, NDH-1 shuttles electrons from NADH, via FMN and iron-sulfur (Fe-S) centers, to quinones in the respiratory chain. The immediate electron acceptor for the enzyme in this species is believed to be ubiquinone. Couples the redox reaction to proton translocation (for every two electrons transferred, four hydrogen ions are translocated across the cytoplasmic membrane), and thus conserves the redox energy in a proton gradient. The polypeptide is NADH-quinone oxidoreductase subunit K (Pseudomonas putida (strain ATCC 700007 / DSM 6899 / JCM 31910 / BCRC 17059 / LMG 24140 / F1)).